A 100-amino-acid chain; its full sequence is NADH-quinone oxidoreductase subunit K (100 aa).

Helical transmembrane passes span 4-24, 29-49, and 60-80; these read LQHG…GLII, LFML…FVVV, and VMFI…LALL.

This sequence belongs to the complex I subunit 4L family. NDH-1 is composed of 13 different subunits. Subunits NuoA, H, J, K, L, M, N constitute the membrane sector of the complex.

The protein localises to the cell inner membrane. The enzyme catalyses a quinone + NADH + 5 H(+)(in) = a quinol + NAD(+) + 4 H(+)(out). In terms of biological role, NDH-1 shuttles electrons from NADH, via FMN and iron-sulfur (Fe-S) centers, to quinones in the respiratory chain. The immediate electron acceptor for the enzyme in this species is believed to be ubiquinone. Couples the redox reaction to proton translocation (for every two electrons transferred, four hydrogen ions are translocated across the cytoplasmic membrane), and thus conserves the redox energy in a proton gradient. This chain is NADH-quinone oxidoreductase subunit K, found in Photorhabdus laumondii subsp. laumondii (strain DSM 15139 / CIP 105565 / TT01) (Photorhabdus luminescens subsp. laumondii).